Reading from the N-terminus, the 1427-residue chain is Tonsoku-like protein (1427 aa).

Residues 1–21 form a disordered region; the sequence is MTSTKEIKQLQKAKSKAQSSN. Low complexity predominate over residues 10-21; the sequence is LQKAKSKAQSSN. TPR repeat units follow at residues 27 to 60, 67 to 100, 107 to 147, 162 to 195, 202 to 235, 242 to 275, 311 to 344, and 352 to 385; these read ASLC…SEIL, AVAN…ARSV, QRAL…VDER, ARLL…AEKN, YRAN…ARKM, SECF…GSQQ, LDLS…AEAL, and AVIH…RKGN. Residues 465–502 form a disordered region; it reads LSLDQSEDEDEEDEVDNSEPLEDSDIQYSESDDEDLEG. The segment covering 469-501 has biased composition (acidic residues); sequence QSEDEDEEDEVDNSEPLEDSDIQYSESDDEDLE. ANK repeat units follow at residues 522 to 551, 555 to 584, and 591 to 620; these read KGET…PVNV, CGWT…NVND, and GGIT…SVTV. 3 disordered regions span residues 692–801, 865–922, and 941–961; these read PLLR…SESG, KKKR…KMNQ, and IMTQ…QAMP. Low complexity predominate over residues 742–761; it reads DDSSSSDNPDSDCSLSPLRP. Residues 773–783 are compositionally biased toward polar residues; that stretch reads SPQEVPSSQEL. The segment covering 871–880 has biased composition (basic and acidic residues); that stretch reads SEHNATRETT. Residues 881–890 are compositionally biased toward polar residues; sequence SRSQNNSSTI. Residues 899 to 910 show a composition bias toward low complexity; the sequence is SCSSRGSLSLKK. LRR repeat units follow at residues 1113–1137, 1141–1168, 1174–1197, 1234–1258, 1293–1316, 1321–1346, and 1377–1400; these read QASL…MMAA, MPRL…AFET, FPCL…ALAS, TGNM…VLKT, DCPL…LLAR, CPSL…LLNG, and SDHI…ALQQ.

This sequence belongs to the Tonsoku family. In terms of assembly, component of the MMS22L-TONSL complex. Binds histones, with a strong preference for histone H3.1 (histones H3.1 and H3-4/H3.1t).

The protein localises to the nucleus. It is found in the chromosome. The protein resides in the cytoplasm. In terms of biological role, component of the MMS22L-TONSL complex, a complex that promotes homologous recombination-mediated repair of double-strand breaks (DSBs) at stalled or collapsed replication forks. The MMS22L-TONSL complex is required to maintain genome integrity during DNA replication. It mediates the assembly of RAD51 filaments on single-stranded DNA (ssDNA): the MMS22L-TONSL complex is recruited to DSBs following histone replacement by histone chaperones and eviction of the replication protein A complex (RPA/RP-A) from DSBs. Following recruitment to DSBs, the TONSL-MMS22L complex promotes recruitment of RAD51 filaments and subsequent homologous recombination. Within the complex, TONSL acts as a histone reader, which recognizes and binds newly synthesized histones following their replacement by histone chaperones. In Danio rerio (Zebrafish), this protein is Tonsoku-like protein (tonsl).